We begin with the raw amino-acid sequence, 121 residues long: Protein CHLORORESPIRATORY REDUCTION 42, chloroplastic (121 aa).

In terms of assembly, biogenesis factor component of the plastidial NDH subcomplex A.

Its subcellular location is the plastid. The protein resides in the chloroplast. It localises to the chloroplast stroma. Required for both formation and activity of the chloroplast NAD(P)H dehydrogenase (NDH) complex of the photosynthetic electron transport chain. Functions in assembly or stabilization of the NDH complex; probably involved, together with CRR1 and CRR6, in the incorporation of NdhJ, NdhM, NdhK and NdhI into the NDH subcomplex A assembly intermediate (NAI500) to produce the complex NAI400. In Arabidopsis thaliana (Mouse-ear cress), this protein is Protein CHLORORESPIRATORY REDUCTION 42, chloroplastic.